A 153-amino-acid chain; its full sequence is uncharacterized protein (153 aa).

Helical transmembrane passes span M1 to S21 and I106 to I126.

It is found in the membrane. This is an uncharacterized protein from Saccharomyces cerevisiae (strain ATCC 204508 / S288c) (Baker's yeast).